The chain runs to 436 residues: AP-2 complex subunit mu-B (436 aa).

The 266-residue stretch at 170 to 435 (RNELFLDVLE…IGRSGIYETR (266 aa)) folds into the MHD domain. Residues Lys342, Lys346, and Lys355 each coordinate a 1,2-diacyl-sn-glycero-3-phospho-(1D-myo-inositol-3,4,5-trisphosphate).

The protein belongs to the adaptor complexes medium subunit family. Adaptor protein complex 2 (AP-2) is a heterotetramer composed of two large adaptins (alpha-type subunit and beta-type subunit), a medium adaptin (mu-type subunit) and a small adaptin (sigma-type subunit).

It localises to the cell membrane. The protein localises to the membrane. It is found in the coated pit. In terms of biological role, component of the adaptor complexes which link clathrin to receptors in coated vesicles. Clathrin-associated protein complexes are believed to interact with the cytoplasmic tails of membrane proteins, leading to their selection and concentration. AP50 is a subunit of the plasma membrane adaptor. The complex binds polyphosphoinositide-containing lipids. This is AP-2 complex subunit mu-B (ap2m1b) from Danio rerio (Zebrafish).